Reading from the N-terminus, the 442-residue chain is Meiotically up-regulated gene 191 protein (442 aa).

Thr-361 is subject to Phosphothreonine. Residues 416–429 (RNNPSSGESTTLPQ) are compositionally biased toward polar residues. The interval 416–442 (RNNPSSGESTTLPQPSHGKKDKDCVIS) is disordered. Over residues 433 to 442 (GKKDKDCVIS) the composition is skewed to basic and acidic residues.

It is found in the cytoplasm. It localises to the nucleus. In terms of biological role, has a role in meiosis. The sequence is that of Meiotically up-regulated gene 191 protein (mug191) from Schizosaccharomyces pombe (strain 972 / ATCC 24843) (Fission yeast).